The sequence spans 40 residues: Photosystem II reaction center protein J (40 aa).

A helical membrane pass occupies residues 10-30 (LWLIGTVAGILVIGLVGIFFY).

The protein belongs to the PsbJ family. PSII is composed of 1 copy each of membrane proteins PsbA, PsbB, PsbC, PsbD, PsbE, PsbF, PsbH, PsbI, PsbJ, PsbK, PsbL, PsbM, PsbT, PsbX, PsbY, PsbZ, Psb30/Ycf12, at least 3 peripheral proteins of the oxygen-evolving complex and a large number of cofactors. It forms dimeric complexes.

It localises to the plastid. It is found in the chloroplast thylakoid membrane. One of the components of the core complex of photosystem II (PSII). PSII is a light-driven water:plastoquinone oxidoreductase that uses light energy to abstract electrons from H(2)O, generating O(2) and a proton gradient subsequently used for ATP formation. It consists of a core antenna complex that captures photons, and an electron transfer chain that converts photonic excitation into a charge separation. This Marchantia polymorpha (Common liverwort) protein is Photosystem II reaction center protein J.